An 836-amino-acid chain; its full sequence is Translation initiation factor IF-2 (836 aa).

A compositionally biased stretch (basic residues) spans 1-17 (MLRLMRQKKLSIQRRTK). Disordered regions lie at residues 1–43 (MLRL…RTVK) and 83–240 (AAKK…KGAA). Low complexity predominate over residues 18 to 27 (TTVSSTTTGG). Positions 83–153 (AAKKEADEKV…AAEEAKRYAE (71 aa)) are enriched in basic and acidic residues. The span at 154 to 167 (ADDSDNESSSEDYS) shows a compositional bias: acidic residues. A compositionally biased stretch (basic residues) spans 192–202 (RGKNKVAKAKK). Residues 203 to 229 (GGRDDENSKNSKNERESNRKNQKDAKF) are compositionally biased toward basic and acidic residues. The tr-type G domain occupies 335–505 (TRAPVVTIMG…LLQSEVLELT (171 aa)). The tract at residues 344–351 (GHVDHGKT) is G1. Residue 344 to 351 (GHVDHGKT) coordinates GTP. Residues 369–373 (GITQH) form a G2 region. Positions 391–394 (DTPG) are G3. GTP-binding positions include 391-395 (DTPGH) and 445-448 (NKID). Residues 445 to 448 (NKID) form a G4 region. The interval 481–483 (SAK) is G5.

The protein belongs to the TRAFAC class translation factor GTPase superfamily. Classic translation factor GTPase family. IF-2 subfamily.

Its subcellular location is the cytoplasm. One of the essential components for the initiation of protein synthesis. Protects formylmethionyl-tRNA from spontaneous hydrolysis and promotes its binding to the 30S ribosomal subunits. Also involved in the hydrolysis of GTP during the formation of the 70S ribosomal complex. This Haemophilus influenzae (strain PittEE) protein is Translation initiation factor IF-2.